The chain runs to 215 residues: RNA pyrophosphohydrolase (215 aa).

Positions 6-149 constitute a Nudix hydrolase domain; it reads GFRPNVGIIL…KRDVYQLALT (144 aa). The Nudix box motif lies at 38 to 59; that stretch reads GGIKYGETPMQAMYRELHEETG.

Belongs to the Nudix hydrolase family. RppH subfamily. It depends on a divalent metal cation as a cofactor.

Its function is as follows. Accelerates the degradation of transcripts by removing pyrophosphate from the 5'-end of triphosphorylated RNA, leading to a more labile monophosphorylated state that can stimulate subsequent ribonuclease cleavage. This chain is RNA pyrophosphohydrolase, found in Burkholderia vietnamiensis (strain G4 / LMG 22486) (Burkholderia cepacia (strain R1808)).